A 498-amino-acid chain; its full sequence is ATP synthase subunit beta, chloroplastic (498 aa).

172–179 (GGAGVGKT) provides a ligand contact to ATP.

The protein belongs to the ATPase alpha/beta chains family. F-type ATPases have 2 components, CF(1) - the catalytic core - and CF(0) - the membrane proton channel. CF(1) has five subunits: alpha(3), beta(3), gamma(1), delta(1), epsilon(1). CF(0) has four main subunits: a(1), b(1), b'(1) and c(9-12).

It is found in the plastid. The protein localises to the chloroplast thylakoid membrane. The enzyme catalyses ATP + H2O + 4 H(+)(in) = ADP + phosphate + 5 H(+)(out). Produces ATP from ADP in the presence of a proton gradient across the membrane. The catalytic sites are hosted primarily by the beta subunits. In Oryza nivara (Indian wild rice), this protein is ATP synthase subunit beta, chloroplastic.